The chain runs to 715 residues: DNA mismatch repair protein MLH3 (715 aa).

It belongs to the DNA mismatch repair MutL/HexB family. As to quaternary structure, heterodimer of MLH1 and MLH3, called MutLbeta, which is involved in correction of a specific subset of IDLs when associated with MutSbeta. Forms a ternary complex with a SGS1-TOP3 heterodimer during meiosis.

It localises to the nucleus. Its function is as follows. Involved in DNA mismatch repair (MMR), correcting insertion-deletion loops (IDLs) resulting from DNA replication, DNA damage or from recombination events between non-identical sequences during meiosis. Component of the MutLbeta heterodimer, which probably forms a ternary complex with the MutSbeta heterodimer that initially recognizes the DNA mismatches. This complex is thought to be responsible for directing the downstream MMR events, including strand discrimination, excision, and resynthesis. Plays a major role in promoting meiotic crossing-over and is involved in maintaining the genetic stability of simple sequence repeats by correction of frameshift intermediates. The protein is DNA mismatch repair protein MLH3 (MLH3) of Saccharomyces cerevisiae (strain ATCC 204508 / S288c) (Baker's yeast).